The following is a 296-amino-acid chain: Formamidopyrimidine-DNA glycosylase (296 aa).

The active-site Schiff-base intermediate with DNA is the P2. E3 (proton donor) is an active-site residue. K61 acts as the Proton donor; for beta-elimination activity in catalysis. DNA contacts are provided by H104, R128, and K174. The FPG-type zinc finger occupies 260–294 (HAYGQQGQACDRCGSNIIREKFANRSSHFCPRCQL). R284 serves as the catalytic Proton donor; for delta-elimination activity.

It belongs to the FPG family. Monomer. The cofactor is Zn(2+).

The catalysed reaction is Hydrolysis of DNA containing ring-opened 7-methylguanine residues, releasing 2,6-diamino-4-hydroxy-5-(N-methyl)formamidopyrimidine.. The enzyme catalyses 2'-deoxyribonucleotide-(2'-deoxyribose 5'-phosphate)-2'-deoxyribonucleotide-DNA = a 3'-end 2'-deoxyribonucleotide-(2,3-dehydro-2,3-deoxyribose 5'-phosphate)-DNA + a 5'-end 5'-phospho-2'-deoxyribonucleoside-DNA + H(+). In terms of biological role, involved in base excision repair of DNA damaged by oxidation or by mutagenic agents. Acts as a DNA glycosylase that recognizes and removes damaged bases. Has a preference for oxidized purines, such as 7,8-dihydro-8-oxoguanine (8-oxoG). Has AP (apurinic/apyrimidinic) lyase activity and introduces nicks in the DNA strand. Cleaves the DNA backbone by beta-delta elimination to generate a single-strand break at the site of the removed base with both 3'- and 5'-phosphates. The protein is Formamidopyrimidine-DNA glycosylase of Corynebacterium diphtheriae (strain ATCC 700971 / NCTC 13129 / Biotype gravis).